The primary structure comprises 337 residues: Protein-methionine-sulfoxide reductase catalytic subunit MsrP (337 aa).

Positions Met-1–Ala-50 form a signal peptide, tat-type signal. Residues Asn-94, Tyr-97–Glu-98, Cys-152, Thr-187, Asn-237, Arg-242, and Ser-253–Lys-255 each bind Mo-molybdopterin.

It belongs to the MsrP family. In terms of assembly, heterodimer of a catalytic subunit (MsrP) and a heme-binding subunit (MsrQ). The cofactor is Mo-molybdopterin. Predicted to be exported by the Tat system. The position of the signal peptide cleavage has not been experimentally proven.

The protein localises to the periplasm. The catalysed reaction is L-methionyl-[protein] + a quinone + H2O = L-methionyl-(S)-S-oxide-[protein] + a quinol. The enzyme catalyses L-methionyl-[protein] + a quinone + H2O = L-methionyl-(R)-S-oxide-[protein] + a quinol. In terms of biological role, part of the MsrPQ system that repairs oxidized periplasmic proteins containing methionine sulfoxide residues (Met-O), using respiratory chain electrons. Thus protects these proteins from oxidative-stress damage caused by reactive species of oxygen and chlorine generated by the host defense mechanisms. MsrPQ is essential for the maintenance of envelope integrity under bleach stress, rescuing a wide series of structurally unrelated periplasmic proteins from methionine oxidation. The catalytic subunit MsrP is non-stereospecific, being able to reduce both (R-) and (S-) diastereoisomers of methionine sulfoxide. This is Protein-methionine-sulfoxide reductase catalytic subunit MsrP from Pseudomonas syringae pv. tomato (strain ATCC BAA-871 / DC3000).